The primary structure comprises 462 residues: Glycine--tRNA ligase (462 aa).

Substrate is bound by residues arginine 101 and glutamate 164. ATP-binding positions include 196 to 198 (RNE), 206 to 211 (FRTREF), 283 to 284 (EL), and 327 to 330 (GVDR). 211–215 (FEQME) is a substrate binding site. 323 to 327 (EPSAG) is a substrate binding site.

This sequence belongs to the class-II aminoacyl-tRNA synthetase family. In terms of assembly, homodimer.

The protein resides in the cytoplasm. It carries out the reaction tRNA(Gly) + glycine + ATP = glycyl-tRNA(Gly) + AMP + diphosphate. Its function is as follows. Catalyzes the attachment of glycine to tRNA(Gly). The sequence is that of Glycine--tRNA ligase from Thermobifida fusca (strain YX).